The chain runs to 480 residues: Cysteine--tRNA ligase (480 aa).

Zn(2+) is bound at residue Cys29. The 'HIGH' region motif lies at 31 to 41; that stretch reads PTVYSDPHLGH. The Zn(2+) site is built by Cys220, His245, and Glu249. The 'KMSKS' region signature appears at 276–280; it reads KMAKS. Lys279 contacts ATP.

This sequence belongs to the class-I aminoacyl-tRNA synthetase family. Monomer. The cofactor is Zn(2+).

It localises to the cytoplasm. The enzyme catalyses tRNA(Cys) + L-cysteine + ATP = L-cysteinyl-tRNA(Cys) + AMP + diphosphate. This chain is Cysteine--tRNA ligase, found in Thermus thermophilus (strain ATCC BAA-163 / DSM 7039 / HB27).